The primary structure comprises 199 residues: NAD(P)H dehydrogenase (quinone) (199 aa).

The Flavodoxin-like domain maps to 4-190 (VLVLYYSAYG…AGARYQGRQI (187 aa)). Residues 10–15 (SAYGHI) and 78–80 (TRF) contribute to the FMN site. Tyrosine 12 is an NAD(+) binding site. A substrate-binding site is contributed by tryptophan 98. Residues 113-119 (SSATQHG) and histidine 134 each bind FMN.

The protein belongs to the WrbA family. FMN serves as cofactor.

It catalyses the reaction a quinone + NADH + H(+) = a quinol + NAD(+). The enzyme catalyses a quinone + NADPH + H(+) = a quinol + NADP(+). The sequence is that of NAD(P)H dehydrogenase (quinone) from Bradyrhizobium diazoefficiens (strain JCM 10833 / BCRC 13528 / IAM 13628 / NBRC 14792 / USDA 110).